Consider the following 426-residue polypeptide: MNAMSRISRRIFLALALSLAGLAQAQLSIEITGAGANRIPVTIVDFPGDPTAARVVTATVRADLERSGLFKLVDNGTAAFDENAPVNHAEWKGKGADALAAGSIARSTDGRMEARFRLYDTQKGVSLGGAAYVTNNSQLRAAGHRIADFIYEKLTGEKGVFSTRIAYVVKARGQFLLQIADSDGQNAATALSSTEPIISPVWSPDGGRLAYVSFEKKKPVIYVHTLASGQRHIVANFKGSNSAPAWSPDGRKLAVVLSKDGNSQIYSVNADGSGLQRITQSSGIDTEPRYSADGGTIYFTSDRGGSPQVYQVGASGGDAKRVTFEGSYNVSPRPAPDGKSLAFISRREGRFQLAVMDLASRQVQVVSDSNKDESPSFAPNSRMILIATEIGGRGVLSAVSSDGRIKQRLSVAAGDVREPAWGPYYQ.

The first 25 residues, M1–A25, serve as a signal peptide directing secretion.

Belongs to the TolB family. As to quaternary structure, the Tol-Pal system is composed of five core proteins: the inner membrane proteins TolA, TolQ and TolR, the periplasmic protein TolB and the outer membrane protein Pal. They form a network linking the inner and outer membranes and the peptidoglycan layer.

Its subcellular location is the periplasm. Its function is as follows. Part of the Tol-Pal system, which plays a role in outer membrane invagination during cell division and is important for maintaining outer membrane integrity. The sequence is that of Tol-Pal system protein TolB from Dechloromonas aromatica (strain RCB).